We begin with the raw amino-acid sequence, 223 residues long: ATP-dependent dethiobiotin synthetase BioD (223 aa).

12-17 (EIGKTH) is an ATP binding site. Thr-16 is a Mg(2+) binding site. Lys-37 is an active-site residue. Substrate is bound at residue Ser-41. ATP-binding positions include Asp-52 and 118–121 (EGVG). The Mg(2+) site is built by Asp-52 and Glu-118.

The protein belongs to the dethiobiotin synthetase family. Homodimer. Mg(2+) is required as a cofactor.

The protein resides in the cytoplasm. The catalysed reaction is (7R,8S)-7,8-diammoniononanoate + CO2 + ATP = (4R,5S)-dethiobiotin + ADP + phosphate + 3 H(+). It functions in the pathway cofactor biosynthesis; biotin biosynthesis; biotin from 7,8-diaminononanoate: step 1/2. Functionally, catalyzes a mechanistically unusual reaction, the ATP-dependent insertion of CO2 between the N7 and N8 nitrogen atoms of 7,8-diaminopelargonic acid (DAPA, also called 7,8-diammoniononanoate) to form a ureido ring. This Acidiphilium cryptum (strain JF-5) protein is ATP-dependent dethiobiotin synthetase BioD.